The following is a 249-amino-acid chain: AA9 family lytic polysaccharide monooxygenase A (249 aa).

The signal sequence occupies residues Met-1–Ala-19. Residues His-20 and His-97 each coordinate Cu(2+). Cys-60 and Cys-183 form a disulfide bridge. His-163 serves as a coordination point for O2. A Cu(2+)-binding site is contributed by Tyr-180.

The protein belongs to the polysaccharide monooxygenase AA9 family. It depends on Cu(2+) as a cofactor.

The protein localises to the secreted. It catalyses the reaction [(1-&gt;4)-beta-D-glucosyl]n+m + reduced acceptor + O2 = 4-dehydro-beta-D-glucosyl-[(1-&gt;4)-beta-D-glucosyl]n-1 + [(1-&gt;4)-beta-D-glucosyl]m + acceptor + H2O.. In terms of biological role, lytic polysaccharide monooxygenase (LPMO) that depolymerizes crystalline and amorphous polysaccharides via the oxidation of scissile alpha- or beta-(1-4)-glycosidic bonds, yielding C4 oxidation products. Catalysis by LPMOs requires the reduction of the active-site copper from Cu(II) to Cu(I) by a reducing agent and H(2)O(2) or O(2) as a cosubstrate. Active on cellulose and cello-oligosaccharides, as well as plant cell wall-derived hemicellulosic polysaccharides. Also active on cello-oligosaccharides such as cellohexaose, cellopentaose or cellotetraose. This Armillaria gallica (Bulbous honey fungus) protein is AA9 family lytic polysaccharide monooxygenase A.